The chain runs to 65 residues: Large ribosomal subunit protein bL35 (65 aa).

Belongs to the bacterial ribosomal protein bL35 family.

This Psychrobacter arcticus (strain DSM 17307 / VKM B-2377 / 273-4) protein is Large ribosomal subunit protein bL35.